A 333-amino-acid polypeptide reads, in one-letter code: uncharacterized protein (333 aa).

The Radical SAM core domain maps to H67–E274. The [4Fe-4S] cluster site is built by C82, C86, and C89.

The cofactor is [4Fe-4S] cluster.

This is an uncharacterized protein from Methanocaldococcus jannaschii (strain ATCC 43067 / DSM 2661 / JAL-1 / JCM 10045 / NBRC 100440) (Methanococcus jannaschii).